The primary structure comprises 179 residues: Ribulose bisphosphate carboxylase small subunit, chloroplastic 5 (179 aa).

The transit peptide at 1–58 (MASSATMLSSVATAACAAPAQASMVAPFVGLKSASAFPVTQKTATGLSTLPSNGGRVQ) directs the protein to the chloroplast.

Belongs to the RuBisCO small chain family. Heterohexadecamer of 8 large and 8 small subunits.

It is found in the plastid. It localises to the chloroplast. RuBisCO catalyzes two reactions: the carboxylation of D-ribulose 1,5-bisphosphate, the primary event in carbon dioxide fixation, as well as the oxidative fragmentation of the pentose substrate. Both reactions occur simultaneously and in competition at the same active site. Although the small subunit is not catalytic it is essential for maximal activity. The protein is Ribulose bisphosphate carboxylase small subunit, chloroplastic 5 of Fritillaria agrestis (Stinkbells).